The following is a 186-amino-acid chain: Probable RNA 2'-phosphotransferase (186 aa).

This sequence belongs to the KptA/TPT1 family.

In terms of biological role, removes the 2'-phosphate from RNA via an intermediate in which the phosphate is ADP-ribosylated by NAD followed by a presumed transesterification to release the RNA and generate ADP-ribose 1''-2''-cyclic phosphate (APPR&gt;P). May function as an ADP-ribosylase. The protein is Probable RNA 2'-phosphotransferase of Agrobacterium fabrum (strain C58 / ATCC 33970) (Agrobacterium tumefaciens (strain C58)).